Reading from the N-terminus, the 95-residue chain is Large ribosomal subunit protein bL27 (95 aa).

The tract at residues 1–25 is disordered; it reads MAHKKGTGSTRNGRDSNAQRLGVKR. Polar residues predominate over residues 7–19; the sequence is TGSTRNGRDSNAQ.

Belongs to the bacterial ribosomal protein bL27 family.

In Gloeobacter violaceus (strain ATCC 29082 / PCC 7421), this protein is Large ribosomal subunit protein bL27.